The chain runs to 248 residues: 3-deoxy-manno-octulosonate cytidylyltransferase (248 aa).

This sequence belongs to the KdsB family.

It localises to the cytoplasm. The enzyme catalyses 3-deoxy-alpha-D-manno-oct-2-ulosonate + CTP = CMP-3-deoxy-beta-D-manno-octulosonate + diphosphate. Its pathway is nucleotide-sugar biosynthesis; CMP-3-deoxy-D-manno-octulosonate biosynthesis; CMP-3-deoxy-D-manno-octulosonate from 3-deoxy-D-manno-octulosonate and CTP: step 1/1. It functions in the pathway bacterial outer membrane biogenesis; lipopolysaccharide biosynthesis. Functionally, activates KDO (a required 8-carbon sugar) for incorporation into bacterial lipopolysaccharide in Gram-negative bacteria. The protein is 3-deoxy-manno-octulosonate cytidylyltransferase of Desulfosudis oleivorans (strain DSM 6200 / JCM 39069 / Hxd3) (Desulfococcus oleovorans).